Reading from the N-terminus, the 305-residue chain is Carbamate kinase (305 aa).

This sequence belongs to the carbamate kinase family.

It localises to the cytoplasm. It catalyses the reaction hydrogencarbonate + NH4(+) + ATP = carbamoyl phosphate + ADP + H2O + H(+). It functions in the pathway metabolic intermediate metabolism; carbamoyl phosphate degradation; CO(2) and NH(3) from carbamoyl phosphate: step 1/1. The chain is Carbamate kinase (arcC) from Thermoplasma acidophilum (strain ATCC 25905 / DSM 1728 / JCM 9062 / NBRC 15155 / AMRC-C165).